The following is a 555-amino-acid chain: MRSDMIKKGIDRAPHRSLLRAAGVKEEEMDKPFIGVCNSYIDIIPGHMHLNKFAEVAKEAIREAGGIPFEFNTIGVDDGIAMGHIGMRYSLPSREIICDAAETVINAHWFDGVFFIPNCDKITPGMLMASVRTNVPSVFVSGGPMEAGRTKDGKNLSLASVFEGVGAFSSGKMTREELLEIEQTACPTCGSCSGMFTANSMNSLMEMLGMALPGNGTIVATSEARHQLIKDAAKHLMNLIEKDIRPRDIITKETIDDAFALDMAMGGSTNTVLHTLAIANEAEIEYDLNRINEVAERVPYLCKISPASDYSMDDVHHAGGVAAIIKELCEIDGAIHPDRITITGKSIYENVKDAEITDDVVIRRKDNPYSPVGGLSILFGNLAPNGAVIKVGAVDPSIQIFEGEAIVYNSQEEAQQGINNGDVREGHVVVIRYEGPKGGPGMPEMLAPTSAIIGRGLGTKVALITDGRFSGASRGISIGHISPEAAEGGPIAFIENGDKIRIDLPNRTIEWLVSDEEIAKRQEGWTEPEPKVKKGYLARYSKLVTSANTGGVMKI.

D78 provides a ligand contact to Mg(2+). Residue C119 coordinates [2Fe-2S] cluster. Residues D120 and K121 each coordinate Mg(2+). K121 carries the N6-carboxylysine modification. C192 contributes to the [2Fe-2S] cluster binding site. Position 444 (E444) interacts with Mg(2+). S470 serves as the catalytic Proton acceptor.

This sequence belongs to the IlvD/Edd family. Homodimer. It depends on [2Fe-2S] cluster as a cofactor. Mg(2+) is required as a cofactor.

It catalyses the reaction (2R)-2,3-dihydroxy-3-methylbutanoate = 3-methyl-2-oxobutanoate + H2O. The catalysed reaction is (2R,3R)-2,3-dihydroxy-3-methylpentanoate = (S)-3-methyl-2-oxopentanoate + H2O. Its pathway is amino-acid biosynthesis; L-isoleucine biosynthesis; L-isoleucine from 2-oxobutanoate: step 3/4. The protein operates within amino-acid biosynthesis; L-valine biosynthesis; L-valine from pyruvate: step 3/4. Functions in the biosynthesis of branched-chain amino acids. Catalyzes the dehydration of (2R,3R)-2,3-dihydroxy-3-methylpentanoate (2,3-dihydroxy-3-methylvalerate) into 2-oxo-3-methylpentanoate (2-oxo-3-methylvalerate) and of (2R)-2,3-dihydroxy-3-methylbutanoate (2,3-dihydroxyisovalerate) into 2-oxo-3-methylbutanoate (2-oxoisovalerate), the penultimate precursor to L-isoleucine and L-valine, respectively. In Halalkalibacterium halodurans (strain ATCC BAA-125 / DSM 18197 / FERM 7344 / JCM 9153 / C-125) (Bacillus halodurans), this protein is Dihydroxy-acid dehydratase.